A 490-amino-acid chain; its full sequence is Subtilisin-like protease 8 (490 aa).

The N-terminal stretch at 1–26 (MKGLLSLSVLPVLAYASPMIVDSIHQ) is a signal peptide. Residues 27-134 (NAAPILSSTN…YIERDSEVHT (108 aa)) constitute a propeptide that is removed on maturation. The Inhibitor I9 domain maps to 43-134 (SYIVVFKKGV…YIERDSEVHT (92 aa)). One can recognise a Peptidase S8 domain in the interval 144–450 (PWGLARISHR…GGSDDYKKII (307 aa)). Catalysis depends on charge relay system residues aspartate 180 and histidine 212. Asparagine 282 carries N-linked (GlcNAc...) asparagine glycosylation. Residue serine 378 is the Charge relay system of the active site. An N-linked (GlcNAc...) asparagine glycan is attached at asparagine 456.

This sequence belongs to the peptidase S8 family.

It is found in the secreted. In terms of biological role, secreted subtilisin-like serine protease with keratinolytic activity that contributes to pathogenicity. This is Subtilisin-like protease 8 (SUB8) from Trichophyton verrucosum (strain HKI 0517).